The primary structure comprises 198 residues: Charged multivesicular body protein 2a homolog 2 (198 aa).

Residues 11–42 (KEVLRENQRNLNKSMREIDRERVALQNQEKKI) adopt a coiled-coil conformation.

It belongs to the SNF7 family. As to quaternary structure, probable core component of the endosomal sorting required for transport complex III (ESCRT-III). ESCRT-III components are thought to multimerize to form a flat lattice on the perimeter membrane of the endosome.

It localises to the endosome membrane. Functionally, probable core component of the endosomal sorting required for transport complex III (ESCRT-III) which is involved in multivesicular bodies (MVBs) formation and sorting of endosomal cargo proteins into MVBs. MVBs contain intraluminal vesicles (ILVs) that are generated by invagination and scission from the limiting membrane of the endosome and are delivered to lysosomes enabling degradation of membrane proteins. The chain is Charged multivesicular body protein 2a homolog 2 (chmp2a2) from Dictyostelium discoideum (Social amoeba).